The sequence spans 236 residues: Flagellar L-ring protein (236 aa).

A signal peptide spans 1–16; sequence MRMQLTAVLAASLLAG. The N-palmitoyl cysteine moiety is linked to residue cysteine 17. A lipid anchor (S-diacylglycerol cysteine) is attached at cysteine 17.

Belongs to the FlgH family. In terms of assembly, the basal body constitutes a major portion of the flagellar organelle and consists of four rings (L,P,S, and M) mounted on a central rod.

It localises to the cell outer membrane. Its subcellular location is the bacterial flagellum basal body. Functionally, assembles around the rod to form the L-ring and probably protects the motor/basal body from shearing forces during rotation. In Sinorhizobium fredii (strain NBRC 101917 / NGR234), this protein is Flagellar L-ring protein.